The primary structure comprises 150 residues: General odorant-binding protein 19d (150 aa).

A signal peptide spans 1–23 (MSHLVHLTVLLLVGILCLGATSA). 3 disulfide bridges follow: Cys41–Cys72, Cys68–Cys126, and Cys116–Cys135.

It belongs to the PBP/GOBP family. As to expression, expressed in the antenna, mostly on the anterior surface of the third antennal segment. Also detected in the maxillary palps and in cells at the bases of the taste hairs on the proboscis and internal taste organs of the head.

The protein resides in the secreted. The protein is General odorant-binding protein 19d (Obp19d) of Drosophila melanogaster (Fruit fly).